Reading from the N-terminus, the 400-residue chain is Enoyl-[acyl-carrier-protein] reductase [NADH] (400 aa).

Residues Gly-48 to Tyr-53, Phe-74 to Glu-75, Asp-111 to Ala-112, and Leu-139 to Ala-140 each bind NAD(+). A substrate-binding site is contributed by Tyr-225. The Proton donor role is filled by Tyr-235. NAD(+) is bound by residues Lys-244 and Val-273–Thr-275.

Belongs to the TER reductase family. Monomer.

It catalyses the reaction a 2,3-saturated acyl-[ACP] + NAD(+) = a (2E)-enoyl-[ACP] + NADH + H(+). Its pathway is lipid metabolism; fatty acid biosynthesis. Functionally, involved in the final reduction of the elongation cycle of fatty acid synthesis (FAS II). Catalyzes the reduction of a carbon-carbon double bond in an enoyl moiety that is covalently linked to an acyl carrier protein (ACP). This is Enoyl-[acyl-carrier-protein] reductase [NADH] from Burkholderia vietnamiensis (strain G4 / LMG 22486) (Burkholderia cepacia (strain R1808)).